Consider the following 388-residue polypeptide: Spermidine/putrescine import ATP-binding protein PotA (388 aa).

The 231-residue stretch at 17–247 (IEIDHVTKRF…PATVFVANFI (231 aa)) folds into the ABC transporter domain. 49–56 (GPSGCGKT) lines the ATP pocket.

This sequence belongs to the ABC transporter superfamily. Spermidine/putrescine importer (TC 3.A.1.11.1) family. In terms of assembly, the complex is composed of two ATP-binding proteins (PotA), two transmembrane proteins (PotB and PotC) and a solute-binding protein (PotD).

It is found in the cell membrane. The catalysed reaction is ATP + H2O + polyamine-[polyamine-binding protein]Side 1 = ADP + phosphate + polyamineSide 2 + [polyamine-binding protein]Side 1.. Functionally, part of the ABC transporter complex PotABCD involved in spermidine/putrescine import. Responsible for energy coupling to the transport system. The protein is Spermidine/putrescine import ATP-binding protein PotA of Mycobacterium sp. (strain KMS).